The following is a 298-amino-acid chain: Acetylglutamate kinase (298 aa).

Substrate contacts are provided by residues 69–70, Arg91, and Asn196; that span reads GG.

It belongs to the acetylglutamate kinase family. ArgB subfamily.

Its subcellular location is the cytoplasm. The enzyme catalyses N-acetyl-L-glutamate + ATP = N-acetyl-L-glutamyl 5-phosphate + ADP. The protein operates within amino-acid biosynthesis; L-arginine biosynthesis; N(2)-acetyl-L-ornithine from L-glutamate: step 2/4. Catalyzes the ATP-dependent phosphorylation of N-acetyl-L-glutamate. In Rhodopseudomonas palustris (strain TIE-1), this protein is Acetylglutamate kinase.